The primary structure comprises 273 residues: Dermonecrotic toxin LhSicTox-alphaIA2av (273 aa).

His-5 is a catalytic residue. The Mg(2+) site is built by Glu-25 and Asp-27. His-41 acts as the Nucleophile in catalysis. 2 disulfide bridges follow: Cys-45–Cys-51 and Cys-47–Cys-190. Asp-85 lines the Mg(2+) pocket.

This sequence belongs to the arthropod phospholipase D family. Class II subfamily. Mg(2+) is required as a cofactor. Expressed by the venom gland.

It is found in the secreted. It catalyses the reaction an N-(acyl)-sphingosylphosphocholine = an N-(acyl)-sphingosyl-1,3-cyclic phosphate + choline. The catalysed reaction is an N-(acyl)-sphingosylphosphoethanolamine = an N-(acyl)-sphingosyl-1,3-cyclic phosphate + ethanolamine. It carries out the reaction a 1-acyl-sn-glycero-3-phosphocholine = a 1-acyl-sn-glycero-2,3-cyclic phosphate + choline. The enzyme catalyses a 1-acyl-sn-glycero-3-phosphoethanolamine = a 1-acyl-sn-glycero-2,3-cyclic phosphate + ethanolamine. Functionally, dermonecrotic toxins cleave the phosphodiester linkage between the phosphate and headgroup of certain phospholipids (sphingolipid and lysolipid substrates), forming an alcohol (often choline) and a cyclic phosphate. This toxin acts on sphingomyelin (SM). It may also act on ceramide phosphoethanolamine (CPE), lysophosphatidylcholine (LPC) and lysophosphatidylethanolamine (LPE), but not on lysophosphatidylserine (LPS), and lysophosphatidylglycerol (LPG). It acts by transphosphatidylation, releasing exclusively cyclic phosphate products as second products. Induces dermonecrosis, hemolysis, increased vascular permeability, edema, inflammatory response, and platelet aggregation. The polypeptide is Dermonecrotic toxin LhSicTox-alphaIA2av (Loxosceles hirsuta (Recluse spider)).